The primary structure comprises 1019 residues: Protein HIRA (1019 aa).

WD repeat units lie at residues 11-53 (HNGK…KEED), 68-107 (NHLA…GPST), 129-168 (SHSG…EILA), 172-211 (GHSG…LETS), 220-263 (GGTT…TNMD), 266-322 (GHRK…PLVV), and 326-367 (LFDK…DPLS). An interaction with RBBP4 region spans residues 23 to 443 (PDGTKFATGG…ASMVNGESLE (421 aa)). Low complexity-rich tracts occupy residues 406-415 (QRQQQQQAEQ) and 544-561 (ATSV…VLTT). Disordered stretches follow at residues 406-433 (QRQQ…APKV), 513-561 (ANSL…VLTT), and 599-633 (LKDQ…LSAP). An interaction with HDAC1 region spans residues 444–1019 (DIRKNLLKKQ…TEYQEQLDIL (576 aa)). Basic and acidic residues predominate over residues 599–625 (LKDQNLIKDNKPKDILESSSDSEEKIP). The tract at residues 960 to 1019 (RLRELCKDLLGPVHYSRGSQWESTVMGLRKRELLKELLPVIGQNLFQRLFTEYQEQLDIL) is interaction with HDAC2.

The protein belongs to the WD repeat HIR1 family. In terms of assembly, interacts with ASF1, HDAC1, HDAC2 and RBBP4.

The protein resides in the nucleus. In terms of biological role, cooperates with ASF1A to promote replication-independent chromatin assembly. May regulate the transcription of a variety of genes controlling cell growth. The protein is Protein HIRA (HIRA) of Gallus gallus (Chicken).